We begin with the raw amino-acid sequence, 447 residues long: Na(+)-translocating NADH-quinone reductase subunit A (447 aa).

It belongs to the NqrA family. Composed of six subunits; NqrA, NqrB, NqrC, NqrD, NqrE and NqrF.

The enzyme catalyses a ubiquinone + n Na(+)(in) + NADH + H(+) = a ubiquinol + n Na(+)(out) + NAD(+). Its function is as follows. NQR complex catalyzes the reduction of ubiquinone-1 to ubiquinol by two successive reactions, coupled with the transport of Na(+) ions from the cytoplasm to the periplasm. NqrA to NqrE are probably involved in the second step, the conversion of ubisemiquinone to ubiquinol. This is Na(+)-translocating NADH-quinone reductase subunit A from Hahella chejuensis (strain KCTC 2396).